The following is a 1407-amino-acid chain: DNA-directed RNA polymerase subunit beta' (1407 aa).

Cys-70, Cys-72, Cys-85, and Cys-88 together coordinate Zn(2+). Mg(2+) is bound by residues Asp-460, Asp-462, and Asp-464. Residues Cys-814, Cys-888, Cys-895, and Cys-898 each contribute to the Zn(2+) site.

Belongs to the RNA polymerase beta' chain family. As to quaternary structure, the RNAP catalytic core consists of 2 alpha, 1 beta, 1 beta' and 1 omega subunit. When a sigma factor is associated with the core the holoenzyme is formed, which can initiate transcription. Mg(2+) serves as cofactor. The cofactor is Zn(2+).

It carries out the reaction RNA(n) + a ribonucleoside 5'-triphosphate = RNA(n+1) + diphosphate. Its function is as follows. DNA-dependent RNA polymerase catalyzes the transcription of DNA into RNA using the four ribonucleoside triphosphates as substrates. This is DNA-directed RNA polymerase subunit beta' from Salmonella choleraesuis (strain SC-B67).